Consider the following 215-residue polypeptide: Adenylate kinase (215 aa).

10–15 (GAGKGT) contributes to the ATP binding site. The segment at 30 to 59 (STGDMFRKAIKDETDLGKEAKSYMDRGELV) is NMP. AMP-binding positions include Thr-31, Arg-36, 57-59 (ELV), 85-88 (GFPR), and Gln-92. The LID stretch occupies residues 126-163 (GRRICEKCGTTYHLVFNPPKVDGICDIDGGKLYQREDD). An ATP-binding site is contributed by Arg-127. 2 residues coordinate Zn(2+): Cys-130 and Cys-133. 136-137 (TY) contacts ATP. Cys-150 and Asp-153 together coordinate Zn(2+). Residues Arg-160 and Arg-171 each coordinate AMP. Residue Lys-199 coordinates ATP.

The protein belongs to the adenylate kinase family. Monomer.

It is found in the cytoplasm. The catalysed reaction is AMP + ATP = 2 ADP. It participates in purine metabolism; AMP biosynthesis via salvage pathway; AMP from ADP: step 1/1. Its function is as follows. Catalyzes the reversible transfer of the terminal phosphate group between ATP and AMP. Plays an important role in cellular energy homeostasis and in adenine nucleotide metabolism. The sequence is that of Adenylate kinase from Staphylococcus epidermidis (strain ATCC 35984 / DSM 28319 / BCRC 17069 / CCUG 31568 / BM 3577 / RP62A).